The following is a 152-amino-acid chain: Peptide deformylase (152 aa).

Residues Cys88 and His130 each coordinate Fe cation. Glu131 is a catalytic residue. His134 provides a ligand contact to Fe cation.

Belongs to the polypeptide deformylase family. Fe(2+) is required as a cofactor.

The catalysed reaction is N-terminal N-formyl-L-methionyl-[peptide] + H2O = N-terminal L-methionyl-[peptide] + formate. Its function is as follows. Removes the formyl group from the N-terminal Met of newly synthesized proteins. Requires at least a dipeptide for an efficient rate of reaction. N-terminal L-methionine is a prerequisite for activity but the enzyme has broad specificity at other positions. The polypeptide is Peptide deformylase (Syntrophomonas wolfei subsp. wolfei (strain DSM 2245B / Goettingen)).